The sequence spans 383 residues: Na(+)/H(+) antiporter NhaA (383 aa).

11 helical membrane passes run 10 to 30 (LIGGLILFSAALLAIVVNNSP), 56 to 76 (LMHWINDGLMAIYFLYIGLEI), 91 to 111 (IITPAIAAFAGLAMPSLIYLS), 121 to 141 (GWAIPSATDIAFTLAILALLG), 150 to 170 (LLVITIAIFDDIAAIAIIAIF), 174 to 194 (SLSLLSLSLGTLFILAMIICN), 206 to 226 (VVLGFFAWFCTIKSGVHATLA), 254 to 274 (PWIIYFILPVFAFANAGISFS), 289 to 308 (IIWGLFVGKQLGIFSILAVF), 327 to 347 (GISLLCGIGFTMSLFIGVLAF), and 355 to 375 (AIKIGVVVGSVLSGFFGYIVL).

Belongs to the NhaA Na(+)/H(+) (TC 2.A.33) antiporter family.

It localises to the cell inner membrane. The catalysed reaction is Na(+)(in) + 2 H(+)(out) = Na(+)(out) + 2 H(+)(in). Functionally, na(+)/H(+) antiporter that extrudes sodium in exchange for external protons. The polypeptide is Na(+)/H(+) antiporter NhaA (Francisella tularensis subsp. tularensis (strain WY96-3418)).